A 31-amino-acid polypeptide reads, in one-letter code: Photosystem II reaction center protein T (31 aa).

Residues 3–23 (AFSYTLLMALAAVTLFFAVAF) form a helical membrane-spanning segment.

The protein belongs to the PsbT family. As to quaternary structure, PSII is composed of 1 copy each of membrane proteins PsbA, PsbB, PsbC, PsbD, PsbE, PsbF, PsbH, PsbI, PsbJ, PsbK, PsbL, PsbM, PsbT, PsbX, PsbY, Psb30/Ycf12, peripheral proteins PsbO, CyanoQ (PsbQ), PsbU, PsbV and a large number of cofactors. It forms dimeric complexes.

The protein resides in the cellular thylakoid membrane. In terms of biological role, found at the monomer-monomer interface of the photosystem II (PS II) dimer, plays a role in assembly and dimerization of PSII. PSII is a light-driven water plastoquinone oxidoreductase, using light energy to abstract electrons from H(2)O, generating a proton gradient subsequently used for ATP formation. This is Photosystem II reaction center protein T from Prochlorococcus marinus (strain MIT 9211).